Reading from the N-terminus, the 421-residue chain is Signal recognition particle receptor FtsY (421 aa).

Residues 228–235, 309–313, and 373–376 contribute to the GTP site; these read GINGAGKT, DTAGR, and TKLD.

It belongs to the GTP-binding SRP family. FtsY subfamily. Part of the signal recognition particle protein translocation system, which is composed of SRP and FtsY. SRP is a ribonucleoprotein composed of Ffh and a 4.5S RNA molecule.

The protein localises to the cell inner membrane. Its subcellular location is the cytoplasm. It carries out the reaction GTP + H2O = GDP + phosphate + H(+). Functionally, involved in targeting and insertion of nascent membrane proteins into the cytoplasmic membrane. Acts as a receptor for the complex formed by the signal recognition particle (SRP) and the ribosome-nascent chain (RNC). Interaction with SRP-RNC leads to the transfer of the RNC complex to the Sec translocase for insertion into the membrane, the hydrolysis of GTP by both Ffh and FtsY, and the dissociation of the SRP-FtsY complex into the individual components. This Neisseria meningitidis serogroup B (strain ATCC BAA-335 / MC58) protein is Signal recognition particle receptor FtsY.